The sequence spans 73 residues: Large ribosomal subunit protein bL31 (73 aa).

4 residues coordinate Zn(2+): cysteine 16, cysteine 18, cysteine 36, and cysteine 39.

Belongs to the bacterial ribosomal protein bL31 family. Type A subfamily. As to quaternary structure, part of the 50S ribosomal subunit. It depends on Zn(2+) as a cofactor.

Its function is as follows. Binds the 23S rRNA. The protein is Large ribosomal subunit protein bL31 of Citrifermentans bemidjiense (strain ATCC BAA-1014 / DSM 16622 / JCM 12645 / Bem) (Geobacter bemidjiensis).